A 366-amino-acid polypeptide reads, in one-letter code: Ribosomal RNA large subunit methyltransferase M (366 aa).

Residues S188, 221–224 (CPGG), D240, D260, and D277 each bind S-adenosyl-L-methionine. K306 (proton acceptor) is an active-site residue.

It belongs to the class I-like SAM-binding methyltransferase superfamily. RNA methyltransferase RlmE family. RlmM subfamily. In terms of assembly, monomer.

It is found in the cytoplasm. It catalyses the reaction cytidine(2498) in 23S rRNA + S-adenosyl-L-methionine = 2'-O-methylcytidine(2498) in 23S rRNA + S-adenosyl-L-homocysteine + H(+). Functionally, catalyzes the 2'-O-methylation at nucleotide C2498 in 23S rRNA. In Sodalis glossinidius (strain morsitans), this protein is Ribosomal RNA large subunit methyltransferase M.